A 382-amino-acid polypeptide reads, in one-letter code: Alkanesulfonate monooxygenase (382 aa).

It belongs to the SsuD family. In terms of assembly, homotetramer.

It catalyses the reaction an alkanesulfonate + FMNH2 + O2 = an aldehyde + FMN + sulfite + H2O + 2 H(+). Functionally, catalyzes the desulfonation of aliphatic sulfonates. This Serratia proteamaculans (strain 568) protein is Alkanesulfonate monooxygenase.